A 243-amino-acid polypeptide reads, in one-letter code: Geranylgeranylglyceryl phosphate synthase (243 aa).

Positions 22 and 51 each coordinate Mg(2+). Residues 169-175 (YLEAGSG), 200-201 (GG), and 222-223 (GT) contribute to the sn-glycerol 1-phosphate site.

Belongs to the GGGP/HepGP synthase family. Group II subfamily. It depends on Mg(2+) as a cofactor.

The protein localises to the cytoplasm. The enzyme catalyses sn-glycerol 1-phosphate + (2E,6E,10E)-geranylgeranyl diphosphate = sn-3-O-(geranylgeranyl)glycerol 1-phosphate + diphosphate. Its pathway is membrane lipid metabolism; glycerophospholipid metabolism. In terms of biological role, prenyltransferase that catalyzes the transfer of the geranylgeranyl moiety of geranylgeranyl diphosphate (GGPP) to the C3 hydroxyl of sn-glycerol-1-phosphate (G1P). This reaction is the first ether-bond-formation step in the biosynthesis of archaeal membrane lipids. The sequence is that of Geranylgeranylglyceryl phosphate synthase from Methanosphaera stadtmanae (strain ATCC 43021 / DSM 3091 / JCM 11832 / MCB-3).